Consider the following 347-residue polypeptide: tRNA N6-adenosine threonylcarbamoyltransferase (347 aa).

Fe cation is bound by residues histidine 111 and histidine 115. Substrate-binding positions include 134-138 (LVSGG), aspartate 167, glycine 180, and asparagine 276. Aspartate 304 contacts Fe cation.

The protein belongs to the KAE1 / TsaD family. It depends on Fe(2+) as a cofactor.

The protein resides in the cytoplasm. The catalysed reaction is L-threonylcarbamoyladenylate + adenosine(37) in tRNA = N(6)-L-threonylcarbamoyladenosine(37) in tRNA + AMP + H(+). Required for the formation of a threonylcarbamoyl group on adenosine at position 37 (t(6)A37) in tRNAs that read codons beginning with adenine. Is involved in the transfer of the threonylcarbamoyl moiety of threonylcarbamoyl-AMP (TC-AMP) to the N6 group of A37, together with TsaE and TsaB. TsaD likely plays a direct catalytic role in this reaction. The polypeptide is tRNA N6-adenosine threonylcarbamoyltransferase (Nitrosospira multiformis (strain ATCC 25196 / NCIMB 11849 / C 71)).